We begin with the raw amino-acid sequence, 361 residues long: Protein-glutamate methylesterase/protein-glutamine glutaminase 1 (361 aa).

Positions 10–127 (KVLVVDDSAL…REGIEEKAQE (118 aa)) constitute a Response regulatory domain. At Asp61 the chain carries 4-aspartylphosphate. In terms of domain architecture, CheB-type methylesterase spans 167–359 (FATTDKLIAV…ASVKRWYAEN (193 aa)). Active-site residues include Ser179, His205, and Asp301.

The protein belongs to the CheB family. Post-translationally, phosphorylated by CheA. Phosphorylation of the N-terminal regulatory domain activates the methylesterase activity.

It is found in the cytoplasm. It carries out the reaction [protein]-L-glutamate 5-O-methyl ester + H2O = L-glutamyl-[protein] + methanol + H(+). The catalysed reaction is L-glutaminyl-[protein] + H2O = L-glutamyl-[protein] + NH4(+). Its function is as follows. Involved in chemotaxis. Part of a chemotaxis signal transduction system that modulates chemotaxis in response to various stimuli. Catalyzes the demethylation of specific methylglutamate residues introduced into the chemoreceptors (methyl-accepting chemotaxis proteins or MCP) by CheR. Also mediates the irreversible deamidation of specific glutamine residues to glutamic acid. This Hahella chejuensis (strain KCTC 2396) protein is Protein-glutamate methylesterase/protein-glutamine glutaminase 1.